The sequence spans 704 residues: Neutral ceramidase (704 aa).

Positions 1-23 (MANSKMAFLAFLAVSFLCGLVSA) are cleaved as a signal peptide. Asn230 carries N-linked (GlcNAc...) asparagine glycosylation. The Nucleophile role is filled by Ser276. Residues Asn362, Asn550, and Asn598 are each glycosylated (N-linked (GlcNAc...) asparagine).

Belongs to the neutral ceramidase family. Post-translationally, N-glycosylated. Widely expressed in different tissues but enriched in neurons at all stages of development.

The protein resides in the secreted. It carries out the reaction an N-acylsphing-4-enine + H2O = sphing-4-enine + a fatty acid. In terms of biological role, hydrolyzes the sphingolipid ceramide into sphingosine and free fatty acid at an optimal pH of 6.5-7.5. Acts as a key regulator of sphingolipid signaling metabolites by generating sphingosine at the cell surface. Regulates synaptic vesicle exocytosis and trafficking by controlling presynaptic terminal sphingolipid composition. The protein is Neutral ceramidase (CDase) of Drosophila melanogaster (Fruit fly).